Consider the following 652-residue polypeptide: MGSVNNEEKTLIEPQRLLRKNTWHPEVDDSEVPPSVFPEYPVHKAIQKTSDSFRKRNYSAGDYVIAPLGGEREGSSLTHSWTFQPGKHNQRLYSDNFQEAQRQWKRLQEWGEVKETKKIRKRFDRFSGRKYINHYEIIKELGRGMHGKVKLGRDTVTRELLAIKIIPKTERRPKLGRANASSQKEKVRREIAILKKCVHPNVVRLREVIDDPSSTKVYLVLEYMSGGEVPWTDCDSPVLSISEARQYFRDVVLGLEYLHYQGIIHRDIKPANLLLNSSNCVKISDFGVSYIANAGLNEDNDVELAKTVGTPAFFAPELCWTDLDRPRPKISEAIDVWALGVTLFCLLFGRCPFNASMEYELFDKIVNERLNIPSTPDIGEEGRDLLKRLLCKDPEQRITLVEVKLHPWTLDGLKDPEKWLQNTDPSTVSRVEVSTDEVASAISLVGRLRRKLGKLFRFRRPKARVFDSSSSVPSDSSICRPESSGNSSIGLSASELSDSFNRLAVNESQKDRERKQVHPVEMGRNSSEKKPRCDFGWDYEAFPNDNQDADDACSYNTGDSIPQVSKSINGHFETYSRTSMDTDDVASFESPNAKHEESGMPVVTFRNYENYDANPSNFHPVVPGFVSSPNLHLAGGSDTPIYCIEHSFTPTN.

Residue Tyr58 is modified to Phosphotyrosine. Ser59 carries the phosphoserine modification. Phosphotyrosine is present on Tyr63. A Protein kinase domain is found at Tyr135–Thr409. ATP-binding positions include Leu141 to Val149 and Lys164. The Proton acceptor role is filled by Asp267. Disordered stretches follow at residues Asp467–Leu491 and Asn506–Lys529. Over residues Ser508–His518 the composition is skewed to basic and acidic residues.

This sequence belongs to the protein kinase superfamily. Ser/Thr protein kinase family.

Its subcellular location is the cytoplasm. The enzyme catalyses L-seryl-[protein] + ATP = O-phospho-L-seryl-[protein] + ADP + H(+). It catalyses the reaction L-threonyl-[protein] + ATP = O-phospho-L-threonyl-[protein] + ADP + H(+). Functionally, involved in actin localization and thus in polarized cell growth. In Schizosaccharomyces pombe (strain 972 / ATCC 24843) (Fission yeast), this protein is Serine/threonine-protein kinase ssp1 (ssp1).